Here is a 233-residue protein sequence, read N- to C-terminus: Ribonuclease 3 (233 aa).

The region spanning 7–136 (KQYLLSEFNI…FIGALYLDQG (130 aa)) is the RNase III domain. Glu-49 contributes to the Mg(2+) binding site. The active site involves Asp-53. The Mg(2+) site is built by Asp-122 and Glu-125. The active site involves Glu-125. In terms of domain architecture, DRBM spans 162 to 232 (DFKSRLQEKL…ARAALKLLEE (71 aa)).

The protein belongs to the ribonuclease III family. As to quaternary structure, homodimer. It depends on Mg(2+) as a cofactor.

It localises to the cytoplasm. The catalysed reaction is Endonucleolytic cleavage to 5'-phosphomonoester.. In terms of biological role, digests double-stranded RNA. Involved in the processing of primary rRNA transcript to yield the immediate precursors to the large and small rRNAs (23S and 16S). Processes some mRNAs, and tRNAs when they are encoded in the rRNA operon. Processes pre-crRNA and tracrRNA of type II CRISPR loci if present in the organism. This Leuconostoc citreum (strain KM20) protein is Ribonuclease 3.